Here is a 435-residue protein sequence, read N- to C-terminus: uncharacterized protein (435 aa).

12 consecutive transmembrane segments (helical) span residues 26-46 (LLSGIIILNYFDRVAISVAAP), 61-81 (IVFSIYTYSYTLMQLPVGSLL), 96-116 (IWSFLTILLAFLQGKLLLYLF), 119-139 (LIGLTSASAFPAASKATALWF), 150-170 (LFDSAAKFSNVIGAPLVAFLV), 177-197 (VAFLTIGCINVLFTIFFWQYY), 242-262 (VWGLMIGFTGYGYTFNLLLTW), 281-301 (FTAVPWLISTISGIAVGGWLV), 325-345 (FGFFFLGSILTNNITVAIICI), 347-367 (IGLAGISATAPVGWSISAELA), 385-405 (LFGGIIAASLTGYLFDVTGSF), and 407-427 (LSFLVAGFVLLLGLVFYVFVL).

It belongs to the major facilitator superfamily. Phthalate permease family.

It localises to the cell membrane. This is an uncharacterized protein from Bacillus subtilis (strain 168).